Reading from the N-terminus, the 85-residue chain is Conotoxin Lv15a (85 aa).

A signal peptide spans 1 to 23; it reads MEKLTVLILVATVLLMIQVLAQS. A propeptide spanning residues 24-49 is cleaved from the precursor; the sequence is GGDKHLKRRPKQYATKRLSALMRGHR. Residue Q50 is modified to Pyrrolidone carboxylic acid.

Belongs to the conotoxin O2 superfamily. In terms of processing, contains 4 disulfide bonds. In terms of tissue distribution, expressed by the venom duct.

The protein localises to the secreted. This Conus lividus (Livid cone) protein is Conotoxin Lv15a.